We begin with the raw amino-acid sequence, 461 residues long: Chromosomal replication initiator protein DnaA (461 aa).

A domain I, interacts with DnaA modulators region spans residues 1 to 83 (MDHSPWQRCL…LRFDVGSKPT (83 aa)). Residues 83–124 (TIDNSVTNSPVSRNTGGNESLFAKATSAPKVAEPESNIPKKT) are domain II. The tract at residues 125 to 341 (NVRLNYTFEN…GALNRVIANA (217 aa)) is domain III, AAA+ region. G169, G171, K172, and T173 together coordinate ATP. A domain IV, binds dsDNA region spans residues 342–461 (NFTGRAITID…YSNLIRTLSS (120 aa)).

Belongs to the DnaA family. In terms of assembly, oligomerizes as a right-handed, spiral filament on DNA at oriC.

The protein resides in the cytoplasm. Functionally, plays an essential role in the initiation and regulation of chromosomal replication. ATP-DnaA binds to the origin of replication (oriC) to initiate formation of the DNA replication initiation complex once per cell cycle. Binds the DnaA box (a 9 base pair repeat at the origin) and separates the double-stranded (ds)DNA. Forms a right-handed helical filament on oriC DNA; dsDNA binds to the exterior of the filament while single-stranded (ss)DNA is stabiized in the filament's interior. The ATP-DnaA-oriC complex binds and stabilizes one strand of the AT-rich DNA unwinding element (DUE), permitting loading of DNA polymerase. After initiation quickly degrades to an ADP-DnaA complex that is not apt for DNA replication. Binds acidic phospholipids. This Colwellia psychrerythraea (strain 34H / ATCC BAA-681) (Vibrio psychroerythus) protein is Chromosomal replication initiator protein DnaA.